The primary structure comprises 198 residues: V-type proton ATPase subunit E (198 aa).

This sequence belongs to the V-ATPase E subunit family.

Functionally, produces ATP from ADP in the presence of a proton gradient across the membrane. The chain is V-type proton ATPase subunit E from Borrelia duttonii (strain Ly).